The following is an 87-amino-acid chain: Large ribosomal subunit protein bL27 (87 aa).

The disordered stretch occupies residues 1–21; the sequence is MAHKKGQGSTQNNRDSAGRRL.

This sequence belongs to the bacterial ribosomal protein bL27 family.

In Nautilia profundicola (strain ATCC BAA-1463 / DSM 18972 / AmH), this protein is Large ribosomal subunit protein bL27.